The primary structure comprises 268 residues: Small ribosomal subunit protein eS1 (268 aa).

2 disordered regions span residues 1–21 and 238–268; these read MAVGKNKGLSKGGKKGGKKKV and GGGKSSDAVVSTEGAVIDRPEGYEPPVQEAV.

It belongs to the eukaryotic ribosomal protein eS1 family. As to quaternary structure, component of the small ribosomal subunit. Mature ribosomes consist of a small (40S) and a large (60S) subunit. The 40S subunit contains about 33 different proteins and 1 molecule of RNA (18S). The 60S subunit contains about 49 different proteins and 3 molecules of RNA (28S, 5.8S and 5S).

It is found in the cytoplasm. Functionally, essential for oogenesis; required for late follicle cell development. In Drosophila ananassae (Fruit fly), this protein is Small ribosomal subunit protein eS1.